The following is a 434-amino-acid chain: Beta-enolase (434 aa).

A2 is modified (N-acetylalanine). T72 carries the phosphothreonine modification. Phosphoserine occurs at positions 83 and 157. Substrate contacts are provided by H158 and E167. S176 is modified (phosphoserine). Position 205 is a phosphothreonine (T205). Residue E210 is the Proton donor of the active site. A Phosphothreonine modification is found at T229. At Y236 the chain carries Phosphotyrosine. D245 provides a ligand contact to Mg(2+). At S263 the chain carries Phosphoserine. Residues E293 and D318 each coordinate substrate. 2 residues coordinate Mg(2+): E293 and D318. The active-site Proton acceptor is K343. Substrate contacts are provided by residues 370-373 (SHRS) and K394.

It belongs to the enolase family. As to quaternary structure, mammalian enolase is composed of 3 isozyme subunits, alpha, beta and gamma, which can form homodimers or heterodimers which are cell-type and development-specific. Interacts with PNKD. Mg(2+) is required as a cofactor. The alpha/alpha homodimer is expressed in embryo and in most adult tissues. The alpha/beta heterodimer and the beta/beta homodimer are found in striated muscle, and the alpha/gamma heterodimer and the gamma/gamma homodimer in neurons.

Its subcellular location is the cytoplasm. It carries out the reaction (2R)-2-phosphoglycerate = phosphoenolpyruvate + H2O. It functions in the pathway carbohydrate degradation; glycolysis; pyruvate from D-glyceraldehyde 3-phosphate: step 4/5. Its function is as follows. Glycolytic enzyme that catalyzes the conversion of 2-phosphoglycerate to phosphoenolpyruvate. Appears to have a function in striated muscle development and regeneration. This chain is Beta-enolase (ENO3), found in Oryctolagus cuniculus (Rabbit).